The primary structure comprises 693 residues: Bacterial dynamin-like protein (693 aa).

Residues 1–521 (MVNQVATDRF…DNSPGWAKWA (521 aa)) are Cytoplasmic-facing. The Dynamin-type G domain maps to 66–313 (QQGVFRLLVL…QADLDGTGFP (248 aa)). Residues 76 to 83 (GDMKRGKS) are G1 motif. GTP is bound at residue 79 to 84 (KRGKST). The segment at 102-103 (CT) is G2 motif. The tract at residues 180–183 (DSPG) is G3 motif. 235–241 (FLVNAWD) provides a ligand contact to GTP. Residues 238 to 241 (NAWD) form a G4 motif region. Residue Asn-268 is a region of interest, G5 motif. 292–293 (SI) provides a ligand contact to GTP. Residues 311 to 571 (GFPKFMDSLN…TAVTGILLGP (261 aa)) are middle domain. Residues 347–378 (REAVARRIPLLEQDVNELKKRIDSVEPEFNKL) adopt a coiled-coil conformation. Residues 522-574 (MGLLSLSKGNLAGFALAGAGFDWKNILLNYFTVIGIGGIITAVTGILLGPIGF) lie within the membrane without spanning it. The tract at residues 572 to 606 (IGFALLGLGVGFLQADQARRELVKTAKKELVKHLP) is paddle domain. The Cytoplasmic portion of the chain corresponds to 575 to 693 (ALLGLGVGFL…AYSNLLAYYS (119 aa)). A GED region spans residues 607–693 (QVAHEQSQVV…AYSNLLAYYS (87 aa)). A coiled-coil region spans residues 661 to 688 (ESEFNRLKNLQEDVIAQLQKIEAAYSNL).

The protein belongs to the TRAFAC class dynamin-like GTPase superfamily. Dynamin/Fzo/YdjA family. Mitofusin subfamily. Homodimer. Self-assembles in the presence of GMP-PNP and liposomes, and probably also in the presence of GTP.

The protein resides in the cell inner membrane. It catalyses the reaction GTP + H2O = GDP + phosphate + H(+). In terms of biological role, dynamin-related GTPase probably involved in membrane remodeling. Lipid and nucleotide-binding are thought to induce a large intramolecular rearrangement, leading to assembly on lipid bilayers and possible membrane curving. In the presence of the non-hydrolyzable GTP analog GMP-PNP self-assembles on a lipid bilayer; this does not stimulate subsequent GTPase activity. Does not bind lipids in the presence of GDP; perhaps GTP hydrolysis disrupts membrane-binding. The chain is Bacterial dynamin-like protein from Nostoc punctiforme (strain ATCC 29133 / PCC 73102).